The following is a 158-amino-acid chain: MSVSVCPCGTGNLLDACCGHYHAGTPAPDAQSLMRSRYSAYVLGLVDYLVGTTLPAQQPGLDRAGMAAWSAQSTWLGLEVESAEVFGGQPEHAFVTFTARWHDTDGDHQHRERSAFVQHAGRWYFIDPTVPLNAGRNDPCPCASGQKFKKCCASYLGS.

This sequence belongs to the UPF0225 family.

The sequence is that of UPF0225 protein PSEEN1229 from Pseudomonas entomophila (strain L48).